The following is a 637-amino-acid chain: Early transcription factor 70 kDa subunit (637 aa).

The region spanning 32-185 is the Helicase ATP-binding domain; that stretch reads RTIIDENRSV…GHIIDLMSEE (154 aa). Position 45–52 (45–52) interacts with ATP; the sequence is HIMGSGKT. A DEXH box motif is present at residues 135–138; sequence DEAH. The Helicase C-terminal domain occupies 327 to 507; that stretch reads KFKYFINRIQ…VLPFDIKKLL (181 aa).

This sequence belongs to the helicase family. VETF subfamily. As to quaternary structure, heterodimer of a 70 kDa and a 82 kDa subunit. Part of the early transcription complex composed of ETF, RAP94/OPG109, and the DNA-directed RNA polymerase.

It is found in the virion. Functionally, acts with RNA polymerase to initiate transcription from early gene promoters. Is recruited by the RPO-associated protein of 94 kDa RAP94/OPG109 to form the early transcription complex, which also contains the core RNA polymerase. ETF heterodimer binds to early gene promoters. The protein is Early transcription factor 70 kDa subunit (OPG118) of Homo sapiens (Human).